Consider the following 700-residue polypeptide: Non-hemolytic phospholipase C (700 aa).

A signal peptide (tat-type signal) is located at residues 1 to 34; the sequence is MTNQNRRDFLRLAAGTAGAAALQLFPPVIREALA.

Belongs to the bacterial phospholipase C family. Predicted to be exported by the Tat system. The position of the signal peptide cleavage has not been experimentally proven.

It catalyses the reaction a 1,2-diacyl-sn-glycero-3-phosphocholine + H2O = phosphocholine + a 1,2-diacyl-sn-glycerol + H(+). Functionally, hydrolyzes phosphatidylserine as well as phosphatidylcholine. The protein is Non-hemolytic phospholipase C (plcN) of Burkholderia pseudomallei (strain K96243).